The following is a 543-amino-acid chain: Cytochrome P450 monooxygenase sphH (543 aa).

2 consecutive transmembrane segments (helical) span residues 1–21 (MGPI…SVYF) and 32–52 (IATF…YQLF). Residue C487 coordinates heme.

It belongs to the cytochrome P450 family. Heme is required as a cofactor.

Its subcellular location is the membrane. The catalysed reaction is presphingofungin + 2 reduced [NADPH--hemoprotein reductase] + O2 = sphingofungin B1 + 2 oxidized [NADPH--hemoprotein reductase] + H2O + 2 H(+). It participates in secondary metabolite biosynthesis. Its function is as follows. Cytochrome P450 monooxygenase; part of the gene cluster that mediates the biosynthesis of sphingofungins, bioactive molecules acting as sphingolipid inhibitors via inhibiting serine palmitoyl transferase (SPT). Within the pathway, sphH catalyzes the conversion of presphingofungin into sphingofungin B1 via hydroxylagtion at position C-14. Sphingofungin biosynthesis starts with the PKS sphB that produces an C18 polyketide precursor 3-hydroxyoctadeca-4,10-dienoyl-ACP containing one delta-6 desaturation and one delta-12 desaturation. The aminoacyl transferase sphA uses the sphB product to produce 3-keto-presphingofungin by adding an aminomalonate molecule. SphF then reduces the C-3 ketone of 3-keto-presphingofungin which leads to presphingofungin. The cytochrome P450 monooxygenase sphH converts presphingofungin into sphingofungin B1 which is further converted to sphingofungin B by the dioxygenase sphC. SphC is also able to convert presphingofungin into sphingofungin B2. The acetyltransferase sphE acetylates sphingofungin B to produce sphingofungin C, but can also convert sphingofungin B1 into sphingofungin C1 and sphingofungin B2 into sphingofungin C2. Finally, sphingofungin C can be spontaneously converted into sphingofungin D. The sequence is that of Cytochrome P450 monooxygenase sphH from Aspergillus fumigatus (strain CBS 144.89 / FGSC A1163 / CEA10) (Neosartorya fumigata).